A 56-amino-acid chain; its full sequence is Ferredoxin (56 aa).

4Fe-4S ferredoxin-type domains follow at residues 2 to 28 (AYKI…SQGD) and 29 to 56 (TQFV…PVQE). Residues cysteine 9, cysteine 12, cysteine 15, cysteine 19, cysteine 38, cysteine 41, cysteine 44, and cysteine 48 each coordinate [4Fe-4S] cluster.

Requires [4Fe-4S] cluster as cofactor.

Ferredoxins are iron-sulfur proteins that transfer electrons in a wide variety of metabolic reactions. In Clostridium perfringens (strain 13 / Type A), this protein is Ferredoxin (fer).